Consider the following 207-residue polypeptide: Alpha-1-acid glycoprotein 2 (207 aa).

The N-terminal stretch at 1 to 18 is a signal peptide; sequence MALHMILVMVSLLPLLEA. The residue at position 19 (glutamine 19) is a Pyrrolidone carboxylic acid. Asparagine 25, asparagine 34, asparagine 76, asparagine 94, and asparagine 104 each carry an N-linked (GlcNAc...) asparagine glycan. Residues cysteine 91 and cysteine 184 are joined by a disulfide bond. The disordered stretch occupies residues 188–207; the sequence is EKQQLELEKETKKDPEEGQA.

It belongs to the calycin superfamily. Lipocalin family. In terms of tissue distribution, expressed by the liver and secreted in plasma.

The protein localises to the secreted. In terms of biological role, functions as a transport protein in the blood stream. Binds various ligands in the interior of its beta-barrel domain. Appears to function in modulating the activity of the immune system during the acute-phase reaction. The sequence is that of Alpha-1-acid glycoprotein 2 (Orm2) from Mus musculus (Mouse).